The sequence spans 120 residues: Large ribosomal subunit protein uL18 (120 aa).

Residues 1–10 are compositionally biased toward basic and acidic residues; that stretch reads MKRTRTESVQ. The interval 1–24 is disordered; it reads MKRTRTESVQRRHSRIRRKVEGTP.

It belongs to the universal ribosomal protein uL18 family. In terms of assembly, part of the 50S ribosomal subunit; part of the 5S rRNA/L5/L18/L25 subcomplex. Contacts the 5S and 23S rRNAs.

Its function is as follows. This is one of the proteins that bind and probably mediate the attachment of the 5S RNA into the large ribosomal subunit, where it forms part of the central protuberance. This is Large ribosomal subunit protein uL18 from Gloeothece citriformis (strain PCC 7424) (Cyanothece sp. (strain PCC 7424)).